Consider the following 216-residue polypeptide: LexA repressor (216 aa).

A DNA-binding region (H-T-H motif) is located at residues 28 to 48 (RAEIAAEFGFSSPNAAEEHLR). Catalysis depends on for autocatalytic cleavage activity residues Ser134 and Lys171.

It belongs to the peptidase S24 family. In terms of assembly, homodimer.

The enzyme catalyses Hydrolysis of Ala-|-Gly bond in repressor LexA.. In terms of biological role, represses a number of genes involved in the response to DNA damage (SOS response), including recA and lexA. In the presence of single-stranded DNA, RecA interacts with LexA causing an autocatalytic cleavage which disrupts the DNA-binding part of LexA, leading to derepression of the SOS regulon and eventually DNA repair. In Ralstonia nicotianae (strain ATCC BAA-1114 / GMI1000) (Ralstonia solanacearum), this protein is LexA repressor.